Reading from the N-terminus, the 253-residue chain is Ubiquinone biosynthesis O-methyltransferase (253 aa).

S-adenosyl-L-methionine-binding residues include R41, G72, D93, and M136.

It belongs to the methyltransferase superfamily. UbiG/COQ3 family.

The catalysed reaction is a 3-demethylubiquinol + S-adenosyl-L-methionine = a ubiquinol + S-adenosyl-L-homocysteine + H(+). It catalyses the reaction a 3-(all-trans-polyprenyl)benzene-1,2-diol + S-adenosyl-L-methionine = a 2-methoxy-6-(all-trans-polyprenyl)phenol + S-adenosyl-L-homocysteine + H(+). Its pathway is cofactor biosynthesis; ubiquinone biosynthesis. Functionally, O-methyltransferase that catalyzes the 2 O-methylation steps in the ubiquinone biosynthetic pathway. This Chelativorans sp. (strain BNC1) protein is Ubiquinone biosynthesis O-methyltransferase.